We begin with the raw amino-acid sequence, 152 residues long: Deoxyuridine 5'-triphosphate nucleotidohydrolase (152 aa).

Residues 71–73, Asn84, 88–90, and Met98 each bind substrate; these read RSG and LID.

This sequence belongs to the dUTPase family. Mg(2+) is required as a cofactor.

It catalyses the reaction dUTP + H2O = dUMP + diphosphate + H(+). The protein operates within pyrimidine metabolism; dUMP biosynthesis; dUMP from dCTP (dUTP route): step 2/2. In terms of biological role, this enzyme is involved in nucleotide metabolism: it produces dUMP, the immediate precursor of thymidine nucleotides and it decreases the intracellular concentration of dUTP so that uracil cannot be incorporated into DNA. The sequence is that of Deoxyuridine 5'-triphosphate nucleotidohydrolase from Shewanella sp. (strain ANA-3).